A 108-amino-acid polypeptide reads, in one-letter code: Nucleoid-associated protein IL1848 (108 aa).

Disordered stretches follow at residues 1–26 (MFKG…AQEE) and 88–108 (KERM…KMPF). Over residues 9–26 (MMKQAQQMQERMQQAQEE) the composition is skewed to low complexity.

It belongs to the YbaB/EbfC family. Homodimer.

Its subcellular location is the cytoplasm. It localises to the nucleoid. In terms of biological role, binds to DNA and alters its conformation. May be involved in regulation of gene expression, nucleoid organization and DNA protection. This chain is Nucleoid-associated protein IL1848, found in Idiomarina loihiensis (strain ATCC BAA-735 / DSM 15497 / L2-TR).